The sequence spans 217 residues: MELKELQVKTRQMAGGPTPKALRRQGFVPAIVYGHKNDPLPLAVDDHTFRLLLKDAGQQALLSLVIDDGAASKTVMLKELQQHPVSLKLIHADFHEVDLTKKITTYVPVATTGVCKGEKEGGVLQLIRRELEVRCLPGLIPESIAIDISALDIGDSVHVADIEAPEGVELVHEVNFTVIAVAAPTKETVEDEEAEEAAAEGAEETGETGETEEGGDE.

Residues 185 to 217 (TKETVEDEEAEEAAAEGAEETGETGETEEGGDE) form a disordered region. Over residues 189-217 (VEDEEAEEAAAEGAEETGETGETEEGGDE) the composition is skewed to acidic residues.

The protein belongs to the bacterial ribosomal protein bL25 family. CTC subfamily. Part of the 50S ribosomal subunit; part of the 5S rRNA/L5/L18/L25 subcomplex. Contacts the 5S rRNA. Binds to the 5S rRNA independently of L5 and L18.

Functionally, this is one of the proteins that binds to the 5S RNA in the ribosome where it forms part of the central protuberance. The chain is Large ribosomal subunit protein bL25 from Desulfosudis oleivorans (strain DSM 6200 / JCM 39069 / Hxd3) (Desulfococcus oleovorans).